The following is a 422-amino-acid chain: Histidine--tRNA ligase (422 aa).

This sequence belongs to the class-II aminoacyl-tRNA synthetase family. Homodimer.

The protein localises to the cytoplasm. The enzyme catalyses tRNA(His) + L-histidine + ATP = L-histidyl-tRNA(His) + AMP + diphosphate + H(+). In Prosthecochloris aestuarii (strain DSM 271 / SK 413), this protein is Histidine--tRNA ligase.